The primary structure comprises 90 residues: MAVKIRLKRMGSKKAPFYRVVVADSRSPRDGRFIEEIGYYNPVAQPAVVKIDTDKAVQWILNGAAPTDTVRNLLSKEGVMAKVHETKYGK.

This sequence belongs to the bacterial ribosomal protein bS16 family.

The chain is Small ribosomal subunit protein bS16 from Brevibacillus brevis (strain 47 / JCM 6285 / NBRC 100599).